We begin with the raw amino-acid sequence, 1469 residues long: Chromosome condensation protein dpy-27 (1469 aa).

A disordered region spans residues 1 to 25 (MQPFKRRALTSDDDRPYADTDSMPE). Basic and acidic residues predominate over residues 9 to 18 (LTSDDDRPYA). ATP is bound at residue 122 to 129 (GPNGSGKS). A coiled-coil region spans residues 356-542 (ELEENKDIML…KGTLQTMMAE (187 aa)). An SMC hinge domain is found at 621 to 736 (PGFKGRLGDL…VDSLEEATRI (116 aa)). Positions 758 to 781 (GALTGGGKPTTGRIRNDNNPNMSG) are disordered. Coiled coils occupy residues 805–974 (LKLQ…AQLE), 1016–1056 (AYQT…DIIE), and 1159–1182 (TSAK…RMAR). Residues 1404–1469 (LPEFNRFPPA…VQRRVRRSRH (66 aa)) are disordered. Positions 1439 to 1449 (EEEDEEDELIE) are enriched in acidic residues.

Belongs to the SMC family. SMC4 subfamily. As to quaternary structure, component of the dosage compensation complex, which contains the mix-1/SMC2 and dpy-27/SMC4 heterodimer, and three non SMC subunits that probably regulate the complex: dpy-26, capg-1 and dpy-28. Within the complex, interacts with dpy-28, mix-1, dpy-26 and capg-1. Interacts with dpy-21. Interacts with dpy-28; the interaction is required for dpy-28 protein stability and dpy-28 association with the X chromosome. Interacts with smcl-1.

Its subcellular location is the nucleus. It localises to the chromosome. In terms of biological role, central component of the condensin I-like dosage compensation complex that associates specifically with hermaphrodite X chromosomes to reduce their gene transcription throughout development. Its strong similarity with the condensin subunit smc4 suggests that it may reduce the X-chromosome transcript level by condensing the chromatin structure during interphase. Involved in the recruitment of the dosage compensation proteins mix-1 and dpy-21 to the X chromosome. Might be involved in the reduction of histone H4 lysine 16 acetylation (H4K16ac) on dosage compensated X chromosomes. As a member of the dosage compensation complex, also binds to regulatory regions of the autosomal her-1 gene, required for male development, possibly contributing to its repression in hermaphrodites. Also plays a role in the regulation of growth and body fat metabolism downstream of the TOR complex 2 pathway. The protein is Chromosome condensation protein dpy-27 (dpy-27) of Caenorhabditis elegans.